The following is a 607-amino-acid chain: MSQVFDASAFLATCSARPGVYRMFDSETRLLYVGKAKNLKKRLASYFRKTGLAPKTAALVGRIAQVETTITANETEALLLEQNLIKQWRPPYNILLRDDKSYPYVFLSDGQFPRLGIHRGAKKAKGRYFGPYPSAGAIRESLSLLQKAFSVRQCEDSYYANRTRPCLQYQIKRCKGPCVGLVDAEEYAEDVRHSVMFLEGRSQQLGNELNAEMEKAAMALNFEKAAELRDQIALLRRVQDQQYMEGGSGDVDVVAAFVNPGGACVHLISVRGGRVLGSKNFFPQVGIEEEVAEVMAAFLSQYYLGNAERELPGELIVNVVHEDFAAISEALQTLRGRELTISHRVRGTRARWQQLAVTNAEQALNARLANRQHMAARFEALAEVLGLDEVPQRLECYDISHSSGEATVASCVVFGPEGPLKSDYRRFNIEGVTAGDDYAAMHQALTRRYGRIKDGEGKLPDVLLVDGGKGQLNMAREVMQELAFTDLTLLGVAKGVTRKAGFETLYLNDVAHEFTLKGDNPALHLIQQIRDEAHRFAITGHRARRGKARRVSSLEDVAGVGPKRRRDLLKHFGGLQELNRASIDEIAKAPGISKKLAESIYASLHSE.

Residues Ala16–Ile94 enclose the GIY-YIG domain. The 36-residue stretch at Gln203 to Val238 folds into the UVR domain.

The protein belongs to the UvrC family. Interacts with UvrB in an incision complex.

Its subcellular location is the cytoplasm. Its function is as follows. The UvrABC repair system catalyzes the recognition and processing of DNA lesions. UvrC both incises the 5' and 3' sides of the lesion. The N-terminal half is responsible for the 3' incision and the C-terminal half is responsible for the 5' incision. In Pseudomonas putida (strain W619), this protein is UvrABC system protein C.